The following is a 193-amino-acid chain: FMN-dependent NADH:quinone oxidoreductase (193 aa).

FMN contacts are provided by residues serine 9, 15-17 (SSS), and 137-140 (TSGG).

It belongs to the azoreductase type 1 family. In terms of assembly, homodimer. FMN serves as cofactor.

It catalyses the reaction 2 a quinone + NADH + H(+) = 2 a 1,4-benzosemiquinone + NAD(+). The catalysed reaction is N,N-dimethyl-1,4-phenylenediamine + anthranilate + 2 NAD(+) = 2-(4-dimethylaminophenyl)diazenylbenzoate + 2 NADH + 2 H(+). Quinone reductase that provides resistance to thiol-specific stress caused by electrophilic quinones. In terms of biological role, also exhibits azoreductase activity. Catalyzes the reductive cleavage of the azo bond in aromatic azo compounds to the corresponding amines. The protein is FMN-dependent NADH:quinone oxidoreductase of Pelagibacter ubique (strain HTCC1062).